We begin with the raw amino-acid sequence, 173 residues long: Photosystem I assembly protein Ycf3 (173 aa).

TPR repeat units lie at residues 35 to 68 (AFVY…EDDA), 72 to 105 (SYIL…NPNL), and 120 to 153 (GERA…APNN).

Belongs to the Ycf3 family.

The protein localises to the cellular thylakoid membrane. Functionally, essential for the assembly of the photosystem I (PSI) complex. May act as a chaperone-like factor to guide the assembly of the PSI subunits. The chain is Photosystem I assembly protein Ycf3 from Gloeothece citriformis (strain PCC 7424) (Cyanothece sp. (strain PCC 7424)).